Consider the following 655-residue polypeptide: Ankyrin repeat and SAM domain-containing protein 3 (655 aa).

An interaction with NEK7 region spans residues 1–421; the sequence is MSELSDEASE…PGSEPQTEKS (421 aa). 2 positions are modified to phosphoserine: Ser-2 and Ser-5. ANK repeat units follow at residues 34–64, 68–97, 101–130, 134–163, 168–197, and 201–220; these read DVPL…DLNK, GGWT…SVNV, EGQT…ELEM, HGWT…NANV, YGYT…KVDT, and SGAT…IVAL. Residue Asn-96 is modified to 3-hydroxyasparagine. 5 positions are modified to phosphoserine: Ser-201, Ser-225, Ser-243, Ser-244, and Ser-245. The interval 314 to 426 is disordered; it reads YRDVTSPINE…QTEKSPYSGP (113 aa). Thr-318 carries the post-translational modification Phosphothreonine. Phosphoserine is present on residues Ser-319, Ser-366, Ser-369, and Ser-373. The span at 378-395 shows a compositional bias: basic residues; the sequence is KSSVRKQTRSYLKNKSRH. One can recognise an SAM domain in the interval 424–487; it reads SGPQDLATLL…TSAIARWHSS (64 aa). Residues 500–575 adopt a coiled-coil conformation; it reads ADRLETEMQE…AALVLDQLRA (76 aa). Ser-540 carries the phosphoserine modification.

In terms of assembly, homooligomer. Interacts (via SAM domain) with ANKS6 (via SAM domain). Interacts with BICC1. Interacts with NPHP1. Interacts with NEK8. Interacts with HIF1AN. Interacts with NEK7; this interaction alters the subcellular distribution of NEK7 by preventing its nuclear translocation. Hydroxylated at Asn-96, most probably by HIF1AN. In terms of processing, phosphorylations at Ser-5, Ser-225, Thr-318, Ser-319, Ser-366 and Ser-369 occur in a NEK7-dependent manner. Post-translationally, polyubiquitinated. Kidney (at protein level).

It is found in the cell projection. Its subcellular location is the cilium. The protein localises to the cytoplasm. In terms of biological role, may be involved in vasopressin signaling in the kidney. In Mus musculus (Mouse), this protein is Ankyrin repeat and SAM domain-containing protein 3 (Anks3).